We begin with the raw amino-acid sequence, 598 residues long: MKNIRNFSIIAHIDHGKSTLSDRLIQTCGGLSDREMEAQVLDSMDLERERGITIKAQSVTLNYKAKDGETYQLNFIDTPGHVDFSYEVSRSLAACEGALLVVDAGQGVEAQTLANCYTAIEMDLEVVPILNKIDLPAADPERVAEEIEDIVGIDAMEAVRCSAKTGVGIEDVLEEIVAKIPAPEGDPNAPLQALIIDSWFDNYLGVVSLVRIKNGVLRKGDKIKVMSTGQTYNVDRLGIFTPKQEDTTVLECGEVGWVVCAIKDILGAPVGDTLTHQHNSATEVLPGFKKVKPQVYAGLFPVSSDDYEAFRDALGKLSLNDASLFYEPETSTALGFGFRCGFLGLLHMEIIQERLEREYDLDLITTAPTVIYEVEMTNGEVVYVDSPAKLPPLNNIAEIREPIAECNMLVPQEYLGNVITLCVEKRGVQTNMVYHGNQIALTYEIPMGEVVLDFFDRLKSTSRGYASLDYGFKRFQAADMVRVDIMINSERVDALALIVHKDNSQYRGRELVEKMRELIPRQQFDIAIQAAIGNHIIARSTVKQLRKNVLAKCYGGDVSRKKKLLQKQKEGKKRMKSLGNVEVPQEAFLAILHVGKDK.

The tr-type G domain occupies 2-184 (KNIRNFSIIA…EIVAKIPAPE (183 aa)). GTP-binding positions include 14 to 19 (DHGKST) and 131 to 134 (NKID).

This sequence belongs to the TRAFAC class translation factor GTPase superfamily. Classic translation factor GTPase family. LepA subfamily.

It is found in the cell inner membrane. The enzyme catalyses GTP + H2O = GDP + phosphate + H(+). Functionally, required for accurate and efficient protein synthesis under certain stress conditions. May act as a fidelity factor of the translation reaction, by catalyzing a one-codon backward translocation of tRNAs on improperly translocated ribosomes. Back-translocation proceeds from a post-translocation (POST) complex to a pre-translocation (PRE) complex, thus giving elongation factor G a second chance to translocate the tRNAs correctly. Binds to ribosomes in a GTP-dependent manner. This chain is Elongation factor 4, found in Haemophilus influenzae (strain ATCC 51907 / DSM 11121 / KW20 / Rd).